Consider the following 578-residue polypeptide: Cyclin-SDS (578 aa).

A disordered region spans residues 1 to 31 (MKEIAMRNSKRKPEPTPFAGKKLRSTRLRRK). Basic residues predominate over residues 21 to 31 (KKLRSTRLRRK).

Belongs to the cyclin family. In terms of assembly, may interact with CDKA-1 and CDKB1-1.

In terms of biological role, meiosis-specific cyclin. Required for normal homolog synapsis and recombination in early to mid-prophase 1. May regulate the timing of sister chromatid separation. The sequence is that of Cyclin-SDS (SDS) from Arabidopsis thaliana (Mouse-ear cress).